The following is a 335-amino-acid chain: uncharacterized protein (335 aa).

Disordered regions lie at residues 152-179 (IQLPDRMPKTTNGTLADPNMPPKTTVND) and 252-271 (LDLFGSPSSENKSTAGSASL). Phosphoserine is present on residues serine 257 and serine 260. Positions 257–271 (SPSSENKSTAGSASL) are enriched in polar residues.

This is an uncharacterized protein from Schizosaccharomyces pombe (strain 972 / ATCC 24843) (Fission yeast).